A 438-amino-acid polypeptide reads, in one-letter code: UDP-N-acetylmuramoylalanine--D-glutamate ligase (438 aa).

112 to 118 (GSNGKST) lines the ATP pocket.

It belongs to the MurCDEF family.

It is found in the cytoplasm. It carries out the reaction UDP-N-acetyl-alpha-D-muramoyl-L-alanine + D-glutamate + ATP = UDP-N-acetyl-alpha-D-muramoyl-L-alanyl-D-glutamate + ADP + phosphate + H(+). The protein operates within cell wall biogenesis; peptidoglycan biosynthesis. Functionally, cell wall formation. Catalyzes the addition of glutamate to the nucleotide precursor UDP-N-acetylmuramoyl-L-alanine (UMA). This Pectobacterium atrosepticum (strain SCRI 1043 / ATCC BAA-672) (Erwinia carotovora subsp. atroseptica) protein is UDP-N-acetylmuramoylalanine--D-glutamate ligase.